A 304-amino-acid chain; its full sequence is Protein Largen (304 aa).

Over residues 1–13 (MSAKSKGNPSSSC) the composition is skewed to polar residues. Disordered regions lie at residues 1-27 (MSAK…TKVK), 66-91 (QLED…TASS), 114-160 (LTVL…GGLP), and 239-304 (HPPG…TTTV). Residues 33 to 70 (IVEDLELVLGDLKDVAKELKEVVDQIDTLTSDLQLEDE) are a coiled coil. Residues 77–91 (TDTLNSSSSGTTASS) are compositionally biased toward low complexity. Composition is skewed to pro residues over residues 120–129 (PNPPPPPPRL), 239–261 (HPPG…PPFP), and 277–289 (PIRP…PTAP).

Functionally, regulator of cell size that promotes cell size increase independently of mTOR and Hippo signaling pathways. Acts by stimulating the translation of specific mRNAs, including those encoding proteins affecting mitochondrial functions. Increases mitochondrial mass and respiration. The protein is Protein Largen (PRR16) of Homo sapiens (Human).